A 370-amino-acid polypeptide reads, in one-letter code: Probable butyrate kinase (370 aa).

It belongs to the acetokinase family.

It is found in the cytoplasm. The enzyme catalyses butanoate + ATP = butanoyl phosphate + ADP. The polypeptide is Probable butyrate kinase (Elusimicrobium minutum (strain Pei191)).